Reading from the N-terminus, the 292-residue chain is NAD kinase (292 aa).

Aspartate 73 serves as the catalytic Proton acceptor. NAD(+) contacts are provided by residues 73–74 (DG), 147–148 (NE), histidine 158, arginine 175, aspartate 177, 188–193 (TAYSLS), and glutamine 247.

Belongs to the NAD kinase family. A divalent metal cation serves as cofactor.

It is found in the cytoplasm. It catalyses the reaction NAD(+) + ATP = ADP + NADP(+) + H(+). In terms of biological role, involved in the regulation of the intracellular balance of NAD and NADP, and is a key enzyme in the biosynthesis of NADP. Catalyzes specifically the phosphorylation on 2'-hydroxyl of the adenosine moiety of NAD to yield NADP. The polypeptide is NAD kinase (Pectobacterium atrosepticum (strain SCRI 1043 / ATCC BAA-672) (Erwinia carotovora subsp. atroseptica)).